The chain runs to 257 residues: Thiazole synthase (257 aa).

K96 acts as the Schiff-base intermediate with DXP in catalysis. 1-deoxy-D-xylulose 5-phosphate-binding positions include G157, 184-185, and 206-207; these read AG and NT.

It belongs to the ThiG family. In terms of assembly, homotetramer. Forms heterodimers with either ThiH or ThiS.

The protein localises to the cytoplasm. The catalysed reaction is [ThiS sulfur-carrier protein]-C-terminal-Gly-aminoethanethioate + 2-iminoacetate + 1-deoxy-D-xylulose 5-phosphate = [ThiS sulfur-carrier protein]-C-terminal Gly-Gly + 2-[(2R,5Z)-2-carboxy-4-methylthiazol-5(2H)-ylidene]ethyl phosphate + 2 H2O + H(+). It participates in cofactor biosynthesis; thiamine diphosphate biosynthesis. Functionally, catalyzes the rearrangement of 1-deoxy-D-xylulose 5-phosphate (DXP) to produce the thiazole phosphate moiety of thiamine. Sulfur is provided by the thiocarboxylate moiety of the carrier protein ThiS. In vitro, sulfur can be provided by H(2)S. The sequence is that of Thiazole synthase from Bartonella henselae (strain ATCC 49882 / DSM 28221 / CCUG 30454 / Houston 1) (Rochalimaea henselae).